The chain runs to 112 residues: Macrodomain Ori protein (112 aa).

Positions phenylalanine 91 to aspartate 112 are disordered. The segment covering glycine 103–aspartate 112 has biased composition (acidic residues).

This sequence belongs to the MaoP family.

Its function is as follows. Involved in the organization of the Ori region of the chromosome into a macrodomain (MD). It constrains DNA mobility in the Ori macrodomain and limits long-distance DNA interactions with other chromosomal regions. The chain is Macrodomain Ori protein from Escherichia coli O157:H7.